The following is a 310-amino-acid chain: Apolipoprotein E (310 aa).

The N-terminal stretch at Met1–Ala18 is a signal peptide. A run of 4 repeats spans residues Ala77 to Gly98, Pro99 to Gly120, Ala121 to Gly142, and Gln143 to Leu164. Residues Ala77–Gln248 are 8 X 22 AA approximate tandem repeats. Met140 bears the Methionine sulfoxide mark. At Ser144 the chain carries Phosphoserine. Residues His155–Arg165 are LDL and other lipoprotein receptors binding. Leu159–Arg162 is a heparin binding site. A repeat spans Arg165 to Glu186. 3 repeat units span residues Arg187–Ala204, Thr205–Arg226, and Gly227–Gln248. The segment at Ala203–Met283 is lipid-binding and lipoprotein association. Gly222–Leu229 is a binding site for heparin. The interval Asn259–Gln310 is homooligomerization. A specificity for association with VLDL region spans residues Arg271–Met283.

It belongs to the apolipoprotein A1/A4/E family. Homotetramer. May interact with ABCA1; functionally associated with ABCA1 in the biogenesis of HDLs. May interact with APP/A4 amyloid-beta peptide; the interaction is extremely stable in vitro but its physiological significance is unclear. May interact with MAPT. May interact with MAP2. In the cerebrospinal fluid, interacts with secreted SORL1. Interacts with PMEL; this allows the loading of PMEL luminal fragment on ILVs to induce fibril nucleation. Post-translationally, APOE exists as multiple glycosylated and sialylated glycoforms within cells and in plasma. The extent of glycosylation and sialylation are tissue and context specific. In terms of processing, glycated in plasma VLDL. Phosphorylated by FAM20C in the extracellular medium.

The protein localises to the secreted. The protein resides in the extracellular space. It is found in the extracellular matrix. It localises to the extracellular vesicle. Its subcellular location is the endosome. The protein localises to the multivesicular body. Its function is as follows. APOE is an apolipoprotein, a protein associating with lipid particles, that mainly functions in lipoprotein-mediated lipid transport between organs via the plasma and interstitial fluids. APOE is a core component of plasma lipoproteins and is involved in their production, conversion and clearance. Apolipoproteins are amphipathic molecules that interact both with lipids of the lipoprotein particle core and the aqueous environment of the plasma. As such, APOE associates with chylomicrons, chylomicron remnants, very low density lipoproteins (VLDL) and intermediate density lipoproteins (IDL) but shows a preferential binding to high-density lipoproteins (HDL). It also binds a wide range of cellular receptors including the LDL receptor/LDLR, the LDL receptor-related proteins LRP1, LRP2 and LRP8 and the very low-density lipoprotein receptor/VLDLR that mediate the cellular uptake of the APOE-containing lipoprotein particles. Finally, APOE also has a heparin-binding activity and binds heparan-sulfate proteoglycans on the surface of cells, a property that supports the capture and the receptor-mediated uptake of APOE-containing lipoproteins by cells. A main function of APOE is to mediate lipoprotein clearance through the uptake of chylomicrons, VLDLs, and HDLs by hepatocytes. APOE is also involved in the biosynthesis by the liver of VLDLs as well as their uptake by peripheral tissues ensuring the delivery of triglycerides and energy storage in muscle, heart and adipose tissues. By participating in the lipoprotein-mediated distribution of lipids among tissues, APOE plays a critical role in plasma and tissues lipid homeostasis. APOE is also involved in two steps of reverse cholesterol transport, the HDLs-mediated transport of cholesterol from peripheral tissues to the liver, and thereby plays an important role in cholesterol homeostasis. First, it is functionally associated with ABCA1 in the biogenesis of HDLs in tissues. Second, it is enriched in circulating HDLs and mediates their uptake by hepatocytes. APOE also plays an important role in lipid transport in the central nervous system, regulating neuron survival and sprouting. The chain is Apolipoprotein E (APOE) from Tapirus terrestris (Lowland tapir).